The primary structure comprises 277 residues: Urease accessory protein UreD (277 aa).

Belongs to the UreD family. In terms of assembly, ureD, UreF and UreG form a complex that acts as a GTP-hydrolysis-dependent molecular chaperone, activating the urease apoprotein by helping to assemble the nickel containing metallocenter of UreC. The UreE protein probably delivers the nickel.

It localises to the cytoplasm. Required for maturation of urease via the functional incorporation of the urease nickel metallocenter. The sequence is that of Urease accessory protein UreD from Pseudomonas putida (strain GB-1).